Reading from the N-terminus, the 271-residue chain is Nuclear egress protein 2 (271 aa).

Topologically, residues 1 to 249 are perinuclear space; that stretch reads MSVVGKRVVD…LGRAVALVRR (249 aa). Residues 250 to 267 traverse the membrane as a helical segment; the sequence is SWPWISAGIAFLCLGLVW. Over 268 to 271 the chain is Nuclear; the sequence is MRPS.

It belongs to the herpesviridae NEC2 protein family. As to quaternary structure, forms a heterohexameric complex with NEC1. In terms of processing, phosphorylated.

The protein resides in the host nucleus inner membrane. Plays an essential role in virion nuclear egress, the first step of virion release from infected cell. Within the host nucleus, NEC1 interacts with the newly formed capsid through the vertexes and directs it to the inner nuclear membrane by associating with NEC2. Induces the budding of the capsid at the inner nuclear membrane as well as its envelopment into the perinuclear space. There, the NEC1/NEC2 complex promotes the fusion of the enveloped capsid with the outer nuclear membrane and the subsequent release of the viral capsid into the cytoplasm where it will reach the secondary budding sites in the host Golgi or trans-Golgi network. This is Nuclear egress protein 2 from Homo sapiens (Human).